Consider the following 300-residue polypeptide: Ribosomal protein L11 methyltransferase (300 aa).

Threonine 152, glycine 173, aspartate 195, and asparagine 234 together coordinate S-adenosyl-L-methionine.

Belongs to the methyltransferase superfamily. PrmA family.

The protein localises to the cytoplasm. It catalyses the reaction L-lysyl-[protein] + 3 S-adenosyl-L-methionine = N(6),N(6),N(6)-trimethyl-L-lysyl-[protein] + 3 S-adenosyl-L-homocysteine + 3 H(+). In terms of biological role, methylates ribosomal protein L11. The sequence is that of Ribosomal protein L11 methyltransferase from Paraburkholderia xenovorans (strain LB400).